Here is a 374-residue protein sequence, read N- to C-terminus: Probable carboxylesterase 4, mitochondrial (374 aa).

The transit peptide at 1–52 (MLRRITCSSSLASPSLFLRFFRQLPRSYSSPTTIAVSGRNIRRLSTPTTLRC) directs the protein to the mitochondrion. The short motif at 135-137 (HGG) is the Involved in the stabilization of the negatively charged intermediate by the formation of the oxyanion hole element. Residues S219, D317, and H349 contribute to the active site.

This sequence belongs to the 'GDXG' lipolytic enzyme family. In terms of tissue distribution, expressed in leaves, stems, flowers and siliques.

It is found in the mitochondrion. The enzyme catalyses a carboxylic ester + H2O = an alcohol + a carboxylate + H(+). Its function is as follows. Carboxylesterase acting on esters with varying acyl chain length. In Arabidopsis thaliana (Mouse-ear cress), this protein is Probable carboxylesterase 4, mitochondrial (CXE4).